Reading from the N-terminus, the 218-residue chain is uncharacterized protein (218 aa).

Positions 184 to 202 (MDREEKRKEKEEKRKRELA) are enriched in basic and acidic residues. Residues 184–218 (MDREEKRKEKEEKRKRELAARQLKRQEKKKQKTSK) are disordered. A compositionally biased stretch (basic residues) spans 205-218 (QLKRQEKKKQKTSK).

This is an uncharacterized protein from Mycoplasma pneumoniae (strain ATCC 29342 / M129 / Subtype 1) (Mycoplasmoides pneumoniae).